We begin with the raw amino-acid sequence, 137 residues long: Small ribosomal subunit protein uS19 (137 aa).

It belongs to the universal ribosomal protein uS19 family.

Protein S19 forms a complex with S13 that binds strongly to the 16S ribosomal RNA. The polypeptide is Small ribosomal subunit protein uS19 (Methanospirillum hungatei JF-1 (strain ATCC 27890 / DSM 864 / NBRC 100397 / JF-1)).